A 1358-amino-acid chain; its full sequence is Phosphoinositide 3-kinase regulatory subunit 4 (1358 aa).

Gly2 is lipidated: N-myristoyl glycine. Residues 26-324 (FEYDKSLGST…AFPEIFYTFL (299 aa)) enclose the Protein kinase domain. Residues 32–40 (LGSTRFFKV) and Lys53 each bind ATP. Catalysis depends on Asp148, which acts as the Proton acceptor. HEAT repeat units follow at residues 413-450 (ILLD…LVKE), 458-495 (IYPE…TALR), and 572-610 (KAND…YVGW). Residues Ser808, Ser813, Ser853, and Ser865 each carry the phosphoserine modification. Residues 875 to 898 (LPKGSDQEVIQTGKPPRSESSAGI) form a disordered region. WD repeat units lie at residues 991–1030 (EHKS…GKTT), 1040–1079 (RIGG…LPKS), 1093–1134 (KEDG…NAWT), 1139–1178 (LKSG…PISS), 1182–1223 (PSRA…RRFT), and 1237–1278 (PSPH…RSYV). The segment at 1307 to 1326 (KQKVGPSDDTPRRGPESLPV) is disordered. The segment covering 1315–1326 (DTPRRGPESLPV) has biased composition (basic and acidic residues). At Thr1316 the chain carries Phosphothreonine. One copy of the WD 7 repeat lies at 1327-1358 (GHHDIITDVATFQTTQGFIVTASRDGIVKVWK).

The protein belongs to the protein kinase superfamily. Ser/Thr protein kinase family. As to quaternary structure, component of the PI3K (PI3KC3/PI3K-III/class III phosphatidylinositol 3-kinase) complex the core of which is composed of the catalytic subunit PIK3C3, the regulatory subunit PIK3R4 and BECN1 associating with additional regulatory/auxiliary subunits to form alternative complex forms. Alternative complex forms containing a fourth regulatory subunit in a mutually exclusive manner are PI3K complex I (PI3KC3-C1) containing ATG14, and PI3K complex II (PI3KC3-C2) containing UVRAG. PI3KC3-C1 displays a V-shaped architecture with PIK3R4 serving as a bridge between PIK3C3 and the ATG14:BECN1 subcomplex. Both, PI3KC3-C1 and PI3KC3-C2, can associate with further regulatory subunits, such as RUBCN, SH3GLB1/Bif-1, AMBRA1 and NRBF2. PI3KC3-C1 probably associates with PIK3CB. Interacts with RAB7A in the presence of PIK3C3/VPS34. Interacts with NRBF2. Interacts with ARMC3. The cofactor is Mn(2+). In terms of processing, myristoylated. Probably autophosphorylated. Ubiquitously expressed.

Its subcellular location is the late endosome. The protein localises to the cytoplasmic vesicle. It is found in the autophagosome. It localises to the membrane. It catalyses the reaction L-seryl-[protein] + ATP = O-phospho-L-seryl-[protein] + ADP + H(+). The catalysed reaction is L-threonyl-[protein] + ATP = O-phospho-L-threonyl-[protein] + ADP + H(+). Its function is as follows. Regulatory subunit of the PI3K complex that mediates formation of phosphatidylinositol 3-phosphate; different complex forms are believed to play a role in multiple membrane trafficking pathways: PI3KC3-C1 is involved in initiation of autophagosomes and PI3KC3-C2 in maturation of autophagosomes and endocytosis. Involved in regulation of degradative endocytic trafficking and cytokinesis, probably in the context of PI3KC3-C2. The chain is Phosphoinositide 3-kinase regulatory subunit 4 (PIK3R4) from Homo sapiens (Human).